Reading from the N-terminus, the 153-residue chain is 4'-phosphopantetheinyl transferase B, mitochondrial (153 aa).

The protein belongs to the P-Pant transferase superfamily.

Its subcellular location is the mitochondrion. It catalyses the reaction apo-[ACP] + CoA = holo-[ACP] + adenosine 3',5'-bisphosphate + H(+). In terms of biological role, acyl-carrier-protein synthase transfers the 4'-phosphopantetheine moiety from coenzyme A to a Ser of an acyl-carrier-protein. The 4'-phosphopantetheine (4'-PPT) portion of CoA provides the essential prosthetic group for a number of carrier proteins and multi-domain enzymes, priming them for the acceptance of acyl building blocks in fatty acid synthesis and many aspects of secondary metabolism mediated by polyketide synthases (PKSs) and non-ribosomal peptide synthetases (NRPSs). PptB is specific for the mitochondrial acyl carrier protein acpA. The polypeptide is 4'-phosphopantetheinyl transferase B, mitochondrial (Aspergillus fumigatus (strain ATCC MYA-4609 / CBS 101355 / FGSC A1100 / Af293) (Neosartorya fumigata)).